Here is a 131-residue protein sequence, read N- to C-terminus: UPF0102 protein YraN (131 aa).

A compositionally biased stretch (polar residues) spans 1–19 (MATVPTRSGSPRQLTTKQT). Residues 1 to 20 (MATVPTRSGSPRQLTTKQTG) are disordered.

This sequence belongs to the UPF0102 family.

The polypeptide is UPF0102 protein YraN (Shigella boydii serotype 18 (strain CDC 3083-94 / BS512)).